The primary structure comprises 294 residues: Endolytic peptidoglycan transglycosylase RlpA (294 aa).

The signal sequence occupies residues 1 to 23 (MKQKIFQILTALCCIFYVMSAQA). In terms of domain architecture, SPOR spans 216–291 (EKYTTVYKIR…NYSKPLIVYT (76 aa)).

This sequence belongs to the RlpA family.

Its function is as follows. Lytic transglycosylase with a strong preference for naked glycan strands that lack stem peptides. In Pasteurella multocida (strain Pm70), this protein is Endolytic peptidoglycan transglycosylase RlpA.